Reading from the N-terminus, the 66-residue chain is MAKKNASLLVKLVSTAIKITKTGEEKSTGYFYVKKRNPKKLTKKLEFRKYDPVVRRHVLFKEEKLK.

The protein belongs to the bacterial ribosomal protein bL33 family.

This chain is Large ribosomal subunit protein bL33, found in Wolbachia pipientis wMel.